The primary structure comprises 292 residues: 4-hydroxybenzoate octaprenyltransferase (292 aa).

Helical transmembrane passes span 20–40 (IGIL…ADGM), 43–63 (PMIL…GCAI), 94–114 (LLIA…LNLL), 135–155 (FFAM…PMAF), 160–180 (GTVP…VIAY), 209–229 (VAGI…AGIL), 234–254 (IWFY…YGMI), and 266–286 (FLHN…DTLF).

This sequence belongs to the UbiA prenyltransferase family. The cofactor is Mg(2+).

It is found in the cell inner membrane. It catalyses the reaction all-trans-octaprenyl diphosphate + 4-hydroxybenzoate = 4-hydroxy-3-(all-trans-octaprenyl)benzoate + diphosphate. It functions in the pathway cofactor biosynthesis; ubiquinone biosynthesis. Functionally, catalyzes the prenylation of para-hydroxybenzoate (PHB) with an all-trans polyprenyl group. Mediates the second step in the final reaction sequence of ubiquinone-8 (UQ-8) biosynthesis, which is the condensation of the polyisoprenoid side chain with PHB, generating the first membrane-bound Q intermediate 3-octaprenyl-4-hydroxybenzoate. This Nitrosomonas europaea (strain ATCC 19718 / CIP 103999 / KCTC 2705 / NBRC 14298) protein is 4-hydroxybenzoate octaprenyltransferase.